A 298-amino-acid polypeptide reads, in one-letter code: ATP synthase gamma chain (298 aa).

This sequence belongs to the ATPase gamma chain family. F-type ATPases have 2 components, CF(1) - the catalytic core - and CF(0) - the membrane proton channel. CF(1) has five subunits: alpha(3), beta(3), gamma(1), delta(1), epsilon(1). CF(0) has three main subunits: a, b and c.

Its subcellular location is the cell inner membrane. Its function is as follows. Produces ATP from ADP in the presence of a proton gradient across the membrane. The gamma chain is believed to be important in regulating ATPase activity and the flow of protons through the CF(0) complex. This Acidithiobacillus ferridurans protein is ATP synthase gamma chain.